The primary structure comprises 144 residues: Transcriptional regulator SlyA (144 aa).

The HTH marR-type domain occupies 2-135 (ESPLGSDLAR…LIKLIAKLEH (134 aa)). Residues 49–72 (QIQLAKAIGIEQPSLVRTLDQLED) constitute a DNA-binding region (H-T-H motif).

Belongs to the SlyA family. In terms of assembly, homodimer.

Its subcellular location is the cytoplasm. Transcription regulator that can specifically activate or repress expression of target genes. Required for virulence and survival in the macrophage environment. Probably activates the transcription of ssrB. Independently of ssrB activation, capable of stimulating the expression of virulence genes found on pathogenicity island 2 (SPI2). Probably activates expression of ispA, xseB genes, and of omp operon. This chain is Transcriptional regulator SlyA, found in Salmonella typhimurium (strain LT2 / SGSC1412 / ATCC 700720).